The following is a 317-amino-acid chain: tRNA dimethylallyltransferase (317 aa).

An ATP-binding site is contributed by 14-21 (GPTAVGKT). Position 16 to 21 (16 to 21 (TAVGKT)) interacts with substrate. The segment at 39-42 (DSMQ) is interaction with substrate tRNA.

The protein belongs to the IPP transferase family. In terms of assembly, monomer. Requires Mg(2+) as cofactor.

It catalyses the reaction adenosine(37) in tRNA + dimethylallyl diphosphate = N(6)-dimethylallyladenosine(37) in tRNA + diphosphate. Its function is as follows. Catalyzes the transfer of a dimethylallyl group onto the adenine at position 37 in tRNAs that read codons beginning with uridine, leading to the formation of N6-(dimethylallyl)adenosine (i(6)A). In Bacillus cereus (strain B4264), this protein is tRNA dimethylallyltransferase.